The following is a 930-amino-acid chain: Translation initiation factor IF-2 (930 aa).

Residues leucine 27–phenylalanine 342 form a disordered region. Residues lysine 52–proline 103 are compositionally biased toward low complexity. Basic and acidic residues-rich tracts occupy residues phenylalanine 112–lysine 128 and glutamine 136–arginine 178. The span at histidine 183 to glutamine 195 shows a compositional bias: polar residues. Residues arginine 218–lysine 245 show a composition bias toward basic and acidic residues. Residues proline 251–alanine 268 show a composition bias toward pro residues. Positions alanine 280–arginine 297 are enriched in basic and acidic residues. A compositionally biased stretch (low complexity) spans asparagine 302–asparagine 318. Positions glutamate 432–glutamate 599 constitute a tr-type G domain. The G1 stretch occupies residues glycine 441 to threonine 448. Glycine 441–threonine 448 contacts GTP. Residues glycine 466–histidine 470 are G2. A G3 region spans residues aspartate 487–glycine 490. GTP is bound by residues aspartate 487–histidine 491 and asparagine 541–aspartate 544. Residues asparagine 541–aspartate 544 form a G4 region. Residues serine 577–lysine 579 form a G5 region.

This sequence belongs to the TRAFAC class translation factor GTPase superfamily. Classic translation factor GTPase family. IF-2 subfamily.

The protein resides in the cytoplasm. Functionally, one of the essential components for the initiation of protein synthesis. Protects formylmethionyl-tRNA from spontaneous hydrolysis and promotes its binding to the 30S ribosomal subunits. Also involved in the hydrolysis of GTP during the formation of the 70S ribosomal complex. The polypeptide is Translation initiation factor IF-2 (Streptococcus sanguinis (strain SK36)).